The following is a 147-amino-acid chain: Hemoglobin subunit delta (147 aa).

The residue at position 2 (valine 2) is an N-acetylalanine; in variant Niigata. The Globin domain maps to 3–147 (HLTPEEKTAV…VANALAHKYH (145 aa)). Serine 51 bears the Phosphoserine mark. Positions 64 and 93 each coordinate heme b.

It belongs to the globin family. As to quaternary structure, heterotetramer of two alpha chains and two delta chains in adult hemoglobin A2 (HbA2). HbA2 represents less than 3.5% of adult hemoglobin. As to expression, red blood cells.

Functionally, involved in oxygen transport from the lung to the various peripheral tissues. This Homo sapiens (Human) protein is Hemoglobin subunit delta (HBD).